A 473-amino-acid polypeptide reads, in one-letter code: Fumarate hydratase class II 2 (473 aa).

Residues 1 to 28 form a disordered region; it reads MAKSARTKTARPATRTETDSFGPIEVPS. Residues 108 to 110, 139 to 142, 149 to 151, and Thr-197 each bind substrate; these read SGT, HPND, and SSN. Residue His-198 is the Proton donor/acceptor of the active site. Ser-328 is a catalytic residue. Residues Ser-329 and 334–336 each bind substrate; that span reads KVN.

The protein belongs to the class-II fumarase/aspartase family. Fumarase subfamily. As to quaternary structure, homotetramer.

Its subcellular location is the cytoplasm. It carries out the reaction (S)-malate = fumarate + H2O. It participates in carbohydrate metabolism; tricarboxylic acid cycle; (S)-malate from fumarate: step 1/1. In terms of biological role, involved in the TCA cycle. Catalyzes the stereospecific interconversion of fumarate to L-malate. In Bradyrhizobium diazoefficiens (strain JCM 10833 / BCRC 13528 / IAM 13628 / NBRC 14792 / USDA 110), this protein is Fumarate hydratase class II 2.